A 372-amino-acid chain; its full sequence is 18-hydroxynorfluorocurarine reductase (372 aa).

The Zn(2+) site is built by Cys-47, Asp-50, His-69, Glu-70, Cys-100, Cys-103, Cys-106, Cys-114, and Cys-172. Residues 197-202 (GLGGIG), Lys-226, 283-285 (LGA), Ser-307, and Arg-354 contribute to the NADP(+) site.

This sequence belongs to the zinc-containing alcohol dehydrogenase family. In terms of assembly, homodimer. Requires Zn(2+) as cofactor. As to expression, mainly expressed in roots.

It catalyses the reaction (19E)-cur-19-en-17-al + NADP(+) = norfluorocurarine + NADPH + H(+). It carries out the reaction 17,18-epoxy-17-hydroxycur-19-ene + NADP(+) = 18-hydroxynorfluorocurarine + NADPH + H(+). Its pathway is alkaloid biosynthesis. Alcohol dehydrogenase involved in the biosynthesis of curare monoterpene indole alkaloids (MIAs), natural products such as strychnine, a neurotoxic compound used as a pesticide to control rodents, and its pharmacologically active derivatives, including brucine, used to regulate blood pressure. Curare alkaloids act as animal glycine receptor antagonists. Catalyzes the conversion of norfluorocurarine to desoxy Wieland-Gumlich aldehyde, and of 18-OH norfluorocurarine to Wieland-Gumlich aldehyde. This is 18-hydroxynorfluorocurarine reductase from Strychnos nux-vomica (Poison nut).